Here is a 295-residue protein sequence, read N- to C-terminus: Probable adenylate kinase 6, chloroplastic (295 aa).

Residues 1 to 46 (MAVSHRLLRPATTTIKNTFSSLFIRSLSSSSSGSSLDPKIDLEEAA) constitute a chloroplast transit peptide. 74 to 79 (GVGKGT) contributes to the ATP binding site. Positions 94–123 (ATGDLVREELSSSGLLSSQLKELVNHGKLV) are NMP. Residues Thr95, Arg100, 121 to 123 (KLV), 151 to 154 (GFPR), and Gln158 contribute to the AMP site. Residues 187 to 235 (GRRICSECGGNYNVACIDIKGDDDTPRMYMPPLLPPPNCESKLISRADD) form an LID region. Arg188 serves as a coordination point for ATP. Arg243 serves as a coordination point for AMP. An ATP-binding site is contributed by Gly271.

It belongs to the adenylate kinase family. Monomer.

It localises to the plastid. It is found in the chloroplast. It carries out the reaction AMP + ATP = 2 ADP. Its function is as follows. Catalyzes the reversible transfer of the terminal phosphate group between ATP and AMP. Plays an important role in cellular energy homeostasis and in adenine nucleotide metabolism. This chain is Probable adenylate kinase 6, chloroplastic, found in Arabidopsis thaliana (Mouse-ear cress).